The following is a 122-amino-acid chain: Putative MOB kinase activator-like 2B (122 aa).

Residues His-69 and His-74 each contribute to the Zn(2+) site.

Belongs to the MOB1/phocein family.

The protein localises to the nucleus. Its subcellular location is the cytoplasm. It is found in the cytoskeleton. The protein resides in the phragmoplast. This is Putative MOB kinase activator-like 2B from Arabidopsis thaliana (Mouse-ear cress).